The chain runs to 379 residues: Wnt inhibitory factor 1 (379 aa).

The N-terminal stretch at 1-28 (MARRSAFPAAALWLWSILLCLLALRAEA) is a signal peptide. One can recognise a WIF domain in the interval 38-177 (LWIDAHQARV…PQNAIFFKTC (140 aa)). An N-linked (GlcNAc...) asparagine glycan is attached at Asn-88. Disulfide bonds link Cys-140–Cys-177, Cys-182–Cys-192, Cys-186–Cys-198, Cys-200–Cys-209, Cys-214–Cys-224, Cys-218–Cys-230, and Cys-232–Cys-241. EGF-like domains follow at residues 178–210 (QQAECPGGCRNGGFCNERRICECPDGFHGPHCE), 211–242 (KALCTPRCMNGGLCVTPGFCICPPGFYGVNCD), 243–271 (KANCSTTCFNGGTCFYPGKCICPPGLEGE), 274–306 (EISKCPQPCRNGGKCIGKSKCKCSKGYQGDLCS), and 307–338 (KPVCEPGCGAHGTCHEPNKCQCQEGWHGRHCN). Residue Asn-245 is glycosylated (N-linked (GlcNAc...) asparagine). Intrachain disulfides connect Cys-246/Cys-256, Cys-250/Cys-262, Cys-278/Cys-288, Cys-282/Cys-294, Cys-296/Cys-305, Cys-310/Cys-320, Cys-314/Cys-326, and Cys-328/Cys-337. The interval 354 to 379 (AQLRQHTPSLKKAEERRDPPESNYIW) is disordered. Residues 364-373 (KKAEERRDPP) show a composition bias toward basic and acidic residues.

As to quaternary structure, interacts with MYOC.

It localises to the secreted. In terms of biological role, binds to WNT proteins and inhibits their activities. May be involved in mesoderm segmentation. This chain is Wnt inhibitory factor 1 (WIF1), found in Homo sapiens (Human).